Here is a 449-residue protein sequence, read N- to C-terminus: Deoxyguanosinetriphosphate triphosphohydrolase-like protein (449 aa).

The disordered stretch occupies residues 1–27 (MTSSVWQERRHGEDKQRRNDHRSPYQR). A compositionally biased stretch (basic and acidic residues) spans 7-27 (QERRHGEDKQRRNDHRSPYQR). One can recognise an HD domain in the interval 59–255 (RLTHSLEVSQ…MELADDIAYA (197 aa)).

The protein belongs to the dGTPase family. Type 2 subfamily.

This chain is Deoxyguanosinetriphosphate triphosphohydrolase-like protein, found in Shewanella baltica (strain OS195).